Consider the following 202-residue polypeptide: MEITSAEFVISNTDVKKCPTGVFPEYAFIGRSNVGKSSLINMLTARKGLAMTSATPGKTMLINHFLINQSWYLVDLPGYGYARRGQKGKDQIRTIIEDYILEREQMTNLFVLIDSRLEPQKIDLEFMEWLGENGIPFSIIFTKADKLKGGRLKMNINNYLRELSKEWEELPPYFISSSENRTGRTEILDYIENISKEVYKNK.

The 176-residue stretch at 22–197 (VFPEYAFIGR…LDYIENISKE (176 aa)) folds into the EngB-type G domain. GTP is bound by residues 30 to 37 (GRSNVGKS), 57 to 61 (GKTML), 75 to 78 (DLPG), 142 to 145 (TKAD), and 173 to 178 (YFISSS). Mg(2+) contacts are provided by serine 37 and threonine 59.

It belongs to the TRAFAC class TrmE-Era-EngA-EngB-Septin-like GTPase superfamily. EngB GTPase family. It depends on Mg(2+) as a cofactor.

Necessary for normal cell division and for the maintenance of normal septation. This Bacteroides thetaiotaomicron (strain ATCC 29148 / DSM 2079 / JCM 5827 / CCUG 10774 / NCTC 10582 / VPI-5482 / E50) protein is Probable GTP-binding protein EngB.